The following is a 138-amino-acid chain: Nucleoside diphosphate kinase (138 aa).

ATP-binding residues include Lys9, Phe57, Arg85, Thr91, Arg102, and Asn112. The Pros-phosphohistidine intermediate role is filled by His115.

This sequence belongs to the NDK family. As to quaternary structure, homotetramer. Mg(2+) serves as cofactor.

It localises to the cytoplasm. It catalyses the reaction a 2'-deoxyribonucleoside 5'-diphosphate + ATP = a 2'-deoxyribonucleoside 5'-triphosphate + ADP. The enzyme catalyses a ribonucleoside 5'-diphosphate + ATP = a ribonucleoside 5'-triphosphate + ADP. Functionally, major role in the synthesis of nucleoside triphosphates other than ATP. The ATP gamma phosphate is transferred to the NDP beta phosphate via a ping-pong mechanism, using a phosphorylated active-site intermediate. The chain is Nucleoside diphosphate kinase from Exiguobacterium sibiricum (strain DSM 17290 / CCUG 55495 / CIP 109462 / JCM 13490 / 255-15).